Consider the following 373-residue polypeptide: Glutamine synthetase (373 aa).

Residues 24-106 form the GS beta-grasp domain; that stretch reads EKVQAMYIWI…VLCEVFKYNR (83 aa). Positions 113 to 373 constitute a GS catalytic domain; that stretch reads LRHTCRRIMD…TGDEPFEYKN (261 aa). Residue Glu134 participates in ATP binding. Residues Glu134, Glu136, Glu196, and Glu203 each contribute to the Mn(2+) site. Residue 203–208 coordinates ATP; the sequence is EFQVGP. L-glutamate is bound at residue 246-247; the sequence is NW. His253 is a binding site for Mn(2+). ATP is bound by residues 255–257, Arg319, and Arg324; that span reads NFS. Arg319 contacts L-glutamate. 336–338 contacts ADP; sequence YFE. Glu338 serves as a coordination point for Mn(2+). Arg340 provides a ligand contact to L-glutamate.

It belongs to the glutamine synthetase family. Homooctamer and homotetramer. Biotin is required as a cofactor. Requires Mg(2+) as cofactor. It depends on Mn(2+) as a cofactor. As to expression, expressed in retina, brain and liver. Little or no detectable expression in breast muscle, pancreas and spleen.

Its subcellular location is the cytoplasm. It is found in the mitochondrion. It carries out the reaction L-glutamate + NH4(+) + ATP = L-glutamine + ADP + phosphate + H(+). The catalysed reaction is L-glutamate + H(+) = 4-aminobutanoate + CO2. Glutamate to glutamine ratio influences catalytic activity. At glutamate to glutamine ratios greater than 4, decarboxylase activity ceases. In the presence of manganese, synthetase activity is limited to concentrations between 10 mM and 20 mM, whereas decarboxylase activity is not affected. Both catalytic activities are inhibited by avidin. Functionally, glutamine synthetase that catalyzes the ATP-dependent conversion of glutamate and ammonia to glutamine. When expressed in liver, it may be involved in detoxifying intramitochondrially generated ammonia. Also acts as glutamate decarboxylase by catalyzing the production of 4-aminobutanoate (gamma-aminobutyric acid, GABA) in a pyridoxal phosphate-independent manner. This is Glutamine synthetase from Gallus gallus (Chicken).